The sequence spans 582 residues: Aspartate--tRNA(Asp/Asn) ligase (582 aa).

L-aspartate is bound at residue Glu-177. Residues 201–204 form an aspartate region; sequence QLFK. Arg-223 contributes to the L-aspartate binding site. Residues 223–225 and Gln-232 each bind ATP; that span reads RDE. His-447 is an L-aspartate binding site. Glu-481 contacts ATP. Arg-488 serves as a coordination point for L-aspartate. 533–536 contributes to the ATP binding site; sequence GLDR.

It belongs to the class-II aminoacyl-tRNA synthetase family. Type 1 subfamily. In terms of assembly, homodimer.

It localises to the cytoplasm. The catalysed reaction is tRNA(Asx) + L-aspartate + ATP = L-aspartyl-tRNA(Asx) + AMP + diphosphate. In terms of biological role, aspartyl-tRNA synthetase with relaxed tRNA specificity since it is able to aspartylate not only its cognate tRNA(Asp) but also tRNA(Asn). Reaction proceeds in two steps: L-aspartate is first activated by ATP to form Asp-AMP and then transferred to the acceptor end of tRNA(Asp/Asn). The protein is Aspartate--tRNA(Asp/Asn) ligase of Chlamydia trachomatis serovar L2 (strain ATCC VR-902B / DSM 19102 / 434/Bu).